Consider the following 259-residue polypeptide: MTDPIADSVAPDLLDEPRLVVEPGVAARFGAVAEPVLLAMGYRLVRIKVSAEAGCTVQIMAERPDGTMLIEDCEAVSKALSPVLDVTDPIEKAYRLEISSPGIDRPLVRRSDFARYSGHLVKIEMAVPHQGRKRYRGLLDGVEGDAIRIQREGVKDEDPLVLLPMHDIGDARLVLTDELIAESMRRGKQAERELKQSLGLAPPPPPHAKRSDPKKSNAPKPKPKPPVKAAAKPKPTNTKQHRLAAGRSRRGDTDLSEGD.

The span at 186-195 (RGKQAERELK) shows a compositional bias: basic and acidic residues. The interval 186-259 (RGKQAERELK…RGDTDLSEGD (74 aa)) is disordered. The span at 239-248 (KQHRLAAGRS) shows a compositional bias: basic residues.

It belongs to the RimP family.

The protein localises to the cytoplasm. In terms of biological role, required for maturation of 30S ribosomal subunits. The polypeptide is Ribosome maturation factor RimP (Rhodopseudomonas palustris (strain HaA2)).